Here is a 70-residue protein sequence, read N- to C-terminus: MKARELKELRSSNPQDLTVKLGDLKAELFNLRFQLATGQLENPMRIREVKKSIAQIKTILREDEMRALEQ.

The protein belongs to the universal ribosomal protein uL29 family.

The sequence is that of Large ribosomal subunit protein uL29 from Clostridium botulinum (strain Alaska E43 / Type E3).